A 370-amino-acid chain; its full sequence is sn-glycerol-3-phosphate import ATP-binding protein UgpC (370 aa).

One can recognise an ABC transporter domain in the interval 4–235 (LRLDGIRKRY…PATRFVASFL (232 aa)). 37–44 (GPSGCGKS) contacts ATP.

The protein belongs to the ABC transporter superfamily. sn-glycerol-3-phosphate importer (TC 3.A.1.1.3) family. As to quaternary structure, the complex is composed of two ATP-binding proteins (UgpC), two transmembrane proteins (UgpA and UgpE) and a solute-binding protein (UgpB).

Its subcellular location is the cell inner membrane. The enzyme catalyses sn-glycerol 3-phosphate(out) + ATP + H2O = sn-glycerol 3-phosphate(in) + ADP + phosphate + H(+). Its function is as follows. Part of the ABC transporter complex UgpBAEC involved in sn-glycerol-3-phosphate (G3P) import. Responsible for energy coupling to the transport system. The polypeptide is sn-glycerol-3-phosphate import ATP-binding protein UgpC (Chromohalobacter salexigens (strain ATCC BAA-138 / DSM 3043 / CIP 106854 / NCIMB 13768 / 1H11)).